The sequence spans 769 residues: Polyribonucleotide nucleotidyltransferase (769 aa).

D490 and D496 together coordinate Mg(2+). Residues 557 to 616 form the KH domain; it reads PKIDTIMIPVDKIKVVIGKGGEQIDKIIAETGVKIDIDDEGLCSIFSSDQSAIDRAKEII. In terms of domain architecture, S1 motif spans 626-694; that stretch reads GEVYEAKVVR…DKGRVDASMR (69 aa). The segment covering 700 to 734 has biased composition (basic and acidic residues); sequence PEGYVEPERKPRERRDNKDRRNGNGFDRRNNDRNN. The segment at 700-769 is disordered; that stretch reads PEGYVEPERK…FPELSTKKPE (70 aa). Positions 736 to 746 are enriched in low complexity; sequence NNHNNNSGNHS. Residues 747-769 are compositionally biased toward basic and acidic residues; the sequence is FELRERKSHVDHEFPELSTKKPE.

It belongs to the polyribonucleotide nucleotidyltransferase family. It depends on Mg(2+) as a cofactor.

It is found in the cytoplasm. The catalysed reaction is RNA(n+1) + phosphate = RNA(n) + a ribonucleoside 5'-diphosphate. In terms of biological role, involved in mRNA degradation. Catalyzes the phosphorolysis of single-stranded polyribonucleotides processively in the 3'- to 5'-direction. This Lactococcus lactis subsp. cremoris (strain SK11) protein is Polyribonucleotide nucleotidyltransferase.